Reading from the N-terminus, the 499-residue chain is MNFFIKSCFLDKEKTDCIVVSVFELSELSDSAIYLDKCSNGHITSLIKLGDIQGKIGDTLMLYKVPKILSKRILLVGCGKKDEINIIRFKKILKNTIHAIKKKSIKNIVYSFSNINIDNIYWMIRRMVLSLKESLYETIKINNTNIKNTNIHSITLNIIKKNDLFIAKTALKHALAIDHAITSTKNLSNLPPNICNPLYLSYKAQELSKKYENNIVVEIIDIKKMKELGMNAYIAVGNGSKNKPFMSVIKYSGNNIVNKKIIAFVGKGLTFDSGGISIKPALHMHEMKYDMCGAAAVYGTLIMAAELQLPLTVIGILSGCENMVGSHSFRPGDVLTTMSGQTVEILNTDAEGRLVLCDSLTYLERFSPDIVIDVATLTGACVTALGESVSGLFSNNEELSNQLLHASQETDDKIWSLPLFSEYHKELNSDIADFSNIGRGKAGAITAACFLSKFTKKYNWAHLDIAGTAWKSGKKSGATGRPVELLCQFLLNQSNYIYN.

The Mn(2+) site is built by K267 and D272. Residue K279 is part of the active site. Mn(2+)-binding residues include D290, D349, and E351. R353 is a catalytic residue.

It belongs to the peptidase M17 family. Requires Mn(2+) as cofactor.

The protein resides in the cytoplasm. The catalysed reaction is Release of an N-terminal amino acid, Xaa-|-Yaa-, in which Xaa is preferably Leu, but may be other amino acids including Pro although not Arg or Lys, and Yaa may be Pro. Amino acid amides and methyl esters are also readily hydrolyzed, but rates on arylamides are exceedingly low.. The enzyme catalyses Release of an N-terminal amino acid, preferentially leucine, but not glutamic or aspartic acids.. Presumably involved in the processing and regular turnover of intracellular proteins. Catalyzes the removal of unsubstituted N-terminal amino acids from various peptides. This is Probable cytosol aminopeptidase from Buchnera aphidicola subsp. Acyrthosiphon pisum (strain 5A).